Here is a 723-residue protein sequence, read N- to C-terminus: Polyribonucleotide nucleotidyltransferase (723 aa).

2 residues coordinate Mg(2+): Asp-488 and Asp-494. One can recognise a KH domain in the interval 555-614 (PKIITLNIKPEKIKDVIGPGGKQINAIIEETGVKIDIEQDGTVYIASQDQAMNRKAIAII). The S1 motif domain occupies 624-692 (GEVYTGKVRR…HQGRVNLSRK (69 aa)). The tract at residues 692-723 (KALLEKKEQPEGDKKPQAEKKFYPKTKKPESK) is disordered. A compositionally biased stretch (basic and acidic residues) spans 693–723 (ALLEKKEQPEGDKKPQAEKKFYPKTKKPESK).

It belongs to the polyribonucleotide nucleotidyltransferase family. Requires Mg(2+) as cofactor.

The protein resides in the cytoplasm. It catalyses the reaction RNA(n+1) + phosphate = RNA(n) + a ribonucleoside 5'-diphosphate. Involved in mRNA degradation. Catalyzes the phosphorolysis of single-stranded polyribonucleotides processively in the 3'- to 5'-direction. In Listeria welshimeri serovar 6b (strain ATCC 35897 / DSM 20650 / CCUG 15529 / CIP 8149 / NCTC 11857 / SLCC 5334 / V8), this protein is Polyribonucleotide nucleotidyltransferase.